The chain runs to 259 residues: Probable metal transport system ATP-binding protein CT_068 (259 aa).

The ABC transporter domain maps to W9 to L241. G41–S48 contacts ATP.

The protein belongs to the ABC transporter superfamily.

The protein localises to the cell inner membrane. In terms of biological role, part of an ATP-driven transport system CT_067/CT_068/CT_069/CT_070 for a metal. Probably responsible for energy coupling to the transport system. This is Probable metal transport system ATP-binding protein CT_068 from Chlamydia trachomatis serovar D (strain ATCC VR-885 / DSM 19411 / UW-3/Cx).